We begin with the raw amino-acid sequence, 299 residues long: Acetylglutamate kinase (299 aa).

Residues 62–63 (GG), arginine 84, and asparagine 188 contribute to the substrate site.

It belongs to the acetylglutamate kinase family. ArgB subfamily.

The protein resides in the cytoplasm. It carries out the reaction N-acetyl-L-glutamate + ATP = N-acetyl-L-glutamyl 5-phosphate + ADP. It functions in the pathway amino-acid biosynthesis; L-arginine biosynthesis; N(2)-acetyl-L-ornithine from L-glutamate: step 2/4. Functionally, catalyzes the ATP-dependent phosphorylation of N-acetyl-L-glutamate. This chain is Acetylglutamate kinase, found in Methanosarcina acetivorans (strain ATCC 35395 / DSM 2834 / JCM 12185 / C2A).